A 203-amino-acid polypeptide reads, in one-letter code: Superoxide dismutase [Mn] (203 aa).

Mn(2+)-binding residues include H27, H81, D164, and H168.

The protein belongs to the iron/manganese superoxide dismutase family. Mn(2+) is required as a cofactor.

The enzyme catalyses 2 superoxide + 2 H(+) = H2O2 + O2. Destroys superoxide anion radicals which are normally produced within the cells and which are toxic to biological systems. This is Superoxide dismutase [Mn] (sodA) from Xanthomonas campestris pv. campestris (strain 8004).